A 510-amino-acid chain; its full sequence is Glycogen synthase (510 aa).

Lys18 contacts ADP-alpha-D-glucose.

It belongs to the glycosyltransferase 1 family. Bacterial/plant glycogen synthase subfamily.

The enzyme catalyses [(1-&gt;4)-alpha-D-glucosyl](n) + ADP-alpha-D-glucose = [(1-&gt;4)-alpha-D-glucosyl](n+1) + ADP + H(+). Its pathway is glycan biosynthesis; glycogen biosynthesis. Functionally, synthesizes alpha-1,4-glucan chains using ADP-glucose. In Bordetella bronchiseptica (strain ATCC BAA-588 / NCTC 13252 / RB50) (Alcaligenes bronchisepticus), this protein is Glycogen synthase.